We begin with the raw amino-acid sequence, 377 residues long: Subtilisin-like protease CPC735_012930 (377 aa).

The N-terminal stretch at 1-20 (MSILFKIFASTLAVVSVVNA) is a signal peptide. Residues 21 to 118 (GELLNFENER…VEPDRMASAT (98 aa)) constitute a propeptide that is removed on maturation. The Inhibitor I9 domain occupies 36–114 (SYIVVMKDGT…HVKYVEPDRM (79 aa)). One can recognise a Peptidase S8 domain in the interval 128–377 (SWGLGRISHT…NKLLYNKSGF (250 aa)). Catalysis depends on charge relay system residues Asp-160 and His-191. Asn-252 is a glycosylation site (N-linked (GlcNAc...) asparagine). Residue Ser-323 is the Charge relay system of the active site. N-linked (GlcNAc...) asparagine glycosylation is found at Asn-364 and Asn-373.

The protein belongs to the peptidase S8 family.

It is found in the secreted. Functionally, secreted subtilisin-like serine protease with keratinolytic activity that contributes to pathogenicity. The polypeptide is Subtilisin-like protease CPC735_012930 (Coccidioides posadasii (strain C735) (Valley fever fungus)).